A 487-amino-acid polypeptide reads, in one-letter code: N-succinylglutamate 5-semialdehyde dehydrogenase (487 aa).

Gly221–Gly226 provides a ligand contact to NAD(+). Residues Glu244 and Cys278 contribute to the active site.

Belongs to the aldehyde dehydrogenase family. AstD subfamily.

The enzyme catalyses N-succinyl-L-glutamate 5-semialdehyde + NAD(+) + H2O = N-succinyl-L-glutamate + NADH + 2 H(+). The protein operates within amino-acid degradation; L-arginine degradation via AST pathway; L-glutamate and succinate from L-arginine: step 4/5. Catalyzes the NAD-dependent reduction of succinylglutamate semialdehyde into succinylglutamate. The polypeptide is N-succinylglutamate 5-semialdehyde dehydrogenase (Pseudomonas putida (strain ATCC 700007 / DSM 6899 / JCM 31910 / BCRC 17059 / LMG 24140 / F1)).